We begin with the raw amino-acid sequence, 144 residues long: Bacilliredoxin BCE_4227 (144 aa).

This sequence belongs to the bacilliredoxin family.

This Bacillus cereus (strain ATCC 10987 / NRS 248) protein is Bacilliredoxin BCE_4227.